Consider the following 385-residue polypeptide: Lipid-A-disaccharide synthase (385 aa).

This sequence belongs to the LpxB family.

The enzyme catalyses a lipid X + a UDP-2-N,3-O-bis[(3R)-3-hydroxyacyl]-alpha-D-glucosamine = a lipid A disaccharide + UDP + H(+). It functions in the pathway bacterial outer membrane biogenesis; LPS lipid A biosynthesis. In terms of biological role, condensation of UDP-2,3-diacylglucosamine and 2,3-diacylglucosamine-1-phosphate to form lipid A disaccharide, a precursor of lipid A, a phosphorylated glycolipid that anchors the lipopolysaccharide to the outer membrane of the cell. This is Lipid-A-disaccharide synthase from Xylella fastidiosa (strain M12).